A 305-amino-acid chain; its full sequence is Elongation factor Ts (305 aa).

An involved in Mg(2+) ion dislocation from EF-Tu region spans residues Thr-81–Val-84.

This sequence belongs to the EF-Ts family.

It localises to the cytoplasm. Functionally, associates with the EF-Tu.GDP complex and induces the exchange of GDP to GTP. It remains bound to the aminoacyl-tRNA.EF-Tu.GTP complex up to the GTP hydrolysis stage on the ribosome. The sequence is that of Elongation factor Ts from Nitratiruptor sp. (strain SB155-2).